The primary structure comprises 324 residues: Alkanal monooxygenase beta chain (324 aa).

Belongs to the bacterial luciferase oxidoreductase family. In terms of assembly, heterodimer of an alpha and a beta chain.

It catalyses the reaction a long-chain fatty aldehyde + FMNH2 + O2 = a long-chain fatty acid + hnu + FMN + H2O + 2 H(+). Its function is as follows. Light-emitting reaction in luminous bacteria. The specific role of the beta subunit is unknown, but it is absolutely required for bioluminescence activity. This Photorhabdus laumondii subsp. laumondii (strain DSM 15139 / CIP 105565 / TT01) (Photorhabdus luminescens subsp. laumondii) protein is Alkanal monooxygenase beta chain (luxB).